A 175-amino-acid polypeptide reads, in one-letter code: ATP-dependent protease subunit HslV (175 aa).

T2 is an active-site residue. Residues G158, C161, and T164 each contribute to the Na(+) site.

The protein belongs to the peptidase T1B family. HslV subfamily. As to quaternary structure, a double ring-shaped homohexamer of HslV is capped on each side by a ring-shaped HslU homohexamer. The assembly of the HslU/HslV complex is dependent on binding of ATP.

Its subcellular location is the cytoplasm. It catalyses the reaction ATP-dependent cleavage of peptide bonds with broad specificity.. With respect to regulation, allosterically activated by HslU binding. In terms of biological role, protease subunit of a proteasome-like degradation complex believed to be a general protein degrading machinery. This Histophilus somni (strain 129Pt) (Haemophilus somnus) protein is ATP-dependent protease subunit HslV.